A 160-amino-acid polypeptide reads, in one-letter code: Lipoprotein signal peptidase (160 aa).

Transmembrane regions (helical) follow at residues 63-83 (YRLP…AVTF) and 89-109 (DQHL…GNLI). Catalysis depends on residues Asp119 and Asp137. A helical membrane pass occupies residues 132–152 (AFNVADSAICVGVALLAVDMI).

The protein belongs to the peptidase A8 family.

The protein resides in the cell inner membrane. It catalyses the reaction Release of signal peptides from bacterial membrane prolipoproteins. Hydrolyzes -Xaa-Yaa-Zaa-|-(S,diacylglyceryl)Cys-, in which Xaa is hydrophobic (preferably Leu), and Yaa (Ala or Ser) and Zaa (Gly or Ala) have small, neutral side chains.. The protein operates within protein modification; lipoprotein biosynthesis (signal peptide cleavage). Functionally, this protein specifically catalyzes the removal of signal peptides from prolipoproteins. The protein is Lipoprotein signal peptidase of Geobacter sulfurreducens (strain ATCC 51573 / DSM 12127 / PCA).